The chain runs to 700 residues: Methionine--tRNA ligase (700 aa).

The 'HIGH' region signature appears at 12 to 22; the sequence is PYANGNFHIGH. Residues cysteine 143, cysteine 146, cysteine 156, and cysteine 159 each contribute to the Zn(2+) site. A 'KMSKS' region motif is present at residues 348 to 352; that stretch reads KMSKS. Residue lysine 351 coordinates ATP. The region spanning 594–700 is the tRNA-binding domain; it reads DFSKIDLRIA…AGAQPGMRVH (107 aa).

The protein belongs to the class-I aminoacyl-tRNA synthetase family. MetG type 1 subfamily. As to quaternary structure, homodimer. It depends on Zn(2+) as a cofactor.

The protein localises to the cytoplasm. The enzyme catalyses tRNA(Met) + L-methionine + ATP = L-methionyl-tRNA(Met) + AMP + diphosphate. Its function is as follows. Is required not only for elongation of protein synthesis but also for the initiation of all mRNA translation through initiator tRNA(fMet) aminoacylation. The polypeptide is Methionine--tRNA ligase (Albidiferax ferrireducens (strain ATCC BAA-621 / DSM 15236 / T118) (Rhodoferax ferrireducens)).